The following is a 233-amino-acid chain: Putative nosiheptide resistance regulatory protein (233 aa).

A DNA-binding region (H-T-H motif) is located at residues R93–A112. Residues P190 to A233 form a disordered region. Positions V217 to A233 are enriched in basic and acidic residues.

Its function is as follows. Seems to be involved in the regulation of nhs expression. In Streptomyces actuosus, this protein is Putative nosiheptide resistance regulatory protein.